The primary structure comprises 449 residues: Bifunctional protein GlmU (449 aa).

The segment at 1-226 (MVIVAVLAAG…YEEILGVNDR (226 aa)) is pyrophosphorylase. UDP-N-acetyl-alpha-D-glucosamine contacts are provided by residues 7-10 (LAAG), Lys-21, Gln-73, and 78-79 (GT). Asp-103 contributes to the Mg(2+) binding site. Residues Gly-140, Glu-155, Asn-170, and Asn-224 each coordinate UDP-N-acetyl-alpha-D-glucosamine. Asn-224 lines the Mg(2+) pocket. A linker region spans residues 227-247 (VQLAAAYQVLQNRIKKAWMQA). The N-acetyltransferase stretch occupies residues 248–449 (GVTLIDPASI…VVKPNWEPEA (202 aa)). Residues Arg-329 and Lys-347 each contribute to the UDP-N-acetyl-alpha-D-glucosamine site. The active-site Proton acceptor is the His-359. The UDP-N-acetyl-alpha-D-glucosamine site is built by Tyr-362 and Asn-373. Residues Ala-376, 382 to 383 (NY), Ala-419, and Arg-436 each bind acetyl-CoA.

The protein in the N-terminal section; belongs to the N-acetylglucosamine-1-phosphate uridyltransferase family. In the C-terminal section; belongs to the transferase hexapeptide repeat family. In terms of assembly, homotrimer. Mg(2+) serves as cofactor.

The protein resides in the cytoplasm. It carries out the reaction alpha-D-glucosamine 1-phosphate + acetyl-CoA = N-acetyl-alpha-D-glucosamine 1-phosphate + CoA + H(+). It catalyses the reaction N-acetyl-alpha-D-glucosamine 1-phosphate + UTP + H(+) = UDP-N-acetyl-alpha-D-glucosamine + diphosphate. The protein operates within nucleotide-sugar biosynthesis; UDP-N-acetyl-alpha-D-glucosamine biosynthesis; N-acetyl-alpha-D-glucosamine 1-phosphate from alpha-D-glucosamine 6-phosphate (route II): step 2/2. It participates in nucleotide-sugar biosynthesis; UDP-N-acetyl-alpha-D-glucosamine biosynthesis; UDP-N-acetyl-alpha-D-glucosamine from N-acetyl-alpha-D-glucosamine 1-phosphate: step 1/1. It functions in the pathway bacterial outer membrane biogenesis; LPS lipid A biosynthesis. Its function is as follows. Catalyzes the last two sequential reactions in the de novo biosynthetic pathway for UDP-N-acetylglucosamine (UDP-GlcNAc). The C-terminal domain catalyzes the transfer of acetyl group from acetyl coenzyme A to glucosamine-1-phosphate (GlcN-1-P) to produce N-acetylglucosamine-1-phosphate (GlcNAc-1-P), which is converted into UDP-GlcNAc by the transfer of uridine 5-monophosphate (from uridine 5-triphosphate), a reaction catalyzed by the N-terminal domain. In Thermosynechococcus vestitus (strain NIES-2133 / IAM M-273 / BP-1), this protein is Bifunctional protein GlmU.